Consider the following 519-residue polypeptide: Sorting nexin-2 (519 aa).

The segment covering 30 to 50 has biased composition (low complexity); it reads STVSTLESSPSSPEPASLPAE. The disordered stretch occupies residues 30–62; it reads STVSTLESSPSSPEPASLPAEDISANSNGSKPV. A Phosphoserine modification is found at serine 97. Threonine 101 and threonine 104 each carry phosphothreonine. A phosphoserine mark is found at serine 117 and serine 119. The PX domain maps to 140–269; sequence FDIEIGVSDP…QFLESSELPR (130 aa). The a 1,2-diacyl-sn-glycero-3-phospho-(1D-myo-inositol-3-phosphate) site is built by arginine 183, serine 185, lysine 211, and arginine 235. Serine 185 is modified (phosphoserine). Residues 260–519 form an interaction with RhoG region; sequence QFLESSELPR…AFLPEAKAIA (260 aa). Residue serine 277 is modified to Phosphoserine. The segment at 278–295 is membrane-binding amphipathic helix; that stretch reads GAGILRMVNKAADAVNKM. In terms of domain architecture, BAR spans 299–519; sequence MNESDAWFEE…AFLPEAKAIA (221 aa). Position 469 is an N6-acetyllysine (lysine 469).

This sequence belongs to the sorting nexin family. In terms of assembly, predominantly forms heterodimers with BAR domain-containing sorting nexins SNX5, SNX6 and SNX32; can self-associate to form homodimers. The heterodimers are proposed to self-assemble into helical arrays on the membrane to stabilize and expand local membrane curvature underlying endosomal tubule formation. Thought to be a component of the originally described retromer complex (also called SNX-BAR retromer) which is a pentamer containing the heterotrimeric retromer cargo-selective complex (CSC), also described as vacuolar protein sorting subcomplex (VPS), and a heterodimeric membrane-deforming subcomplex formed between SNX1 or SNX2 and SNX5 or SNX6 (also called SNX-BAR subcomplex); the respective CSC and SNX-BAR subcomplexes associate with low affinity. Interacts with SNX5, SNX6, SNX32, VPS26A, VPS29, VPS35, FNBP1, KALRN, RHOG (GDP-bound form).

The protein localises to the early endosome membrane. It localises to the cell projection. The protein resides in the lamellipodium. Involved in several stages of intracellular trafficking. Interacts with membranes containing phosphatidylinositol 3-phosphate (PtdIns(3P)) or phosphatidylinositol 3,5-bisphosphate (PtdIns(3,5)P2). Acts in part as component of the retromer membrane-deforming SNX-BAR subcomplex. The SNX-BAR retromer mediates retrograde transport of cargo proteins from endosomes to the trans-Golgi network (TGN) and is involved in endosome-to-plasma membrane transport for cargo protein recycling. The SNX-BAR subcomplex functions to deform the donor membrane into a tubular profile called endosome-to-TGN transport carrier (ETC). Can sense membrane curvature and has in vitro vesicle-to-membrane remodeling activity. Required for retrograde endosome-to-TGN transport of TGN38. Promotes KALRN- and RHOG-dependent but retromer-independent membrane remodeling such as lamellipodium formation; the function is dependent on GEF activity of KALRN. The chain is Sorting nexin-2 (Snx2) from Mus musculus (Mouse).